Here is a 448-residue protein sequence, read N- to C-terminus: N-succinylarginine dihydrolase (448 aa).

Substrate-binding positions include 19–28 (AGLSSGNIAS), Asn110, and 137–138 (HR). Residue Glu174 is part of the active site. Arg216 provides a ligand contact to substrate. The active site involves His252. Residues Asp254 and Asn366 each contribute to the substrate site. Cys372 acts as the Nucleophile in catalysis.

The protein belongs to the succinylarginine dihydrolase family. In terms of assembly, homodimer.

The enzyme catalyses N(2)-succinyl-L-arginine + 2 H2O + 2 H(+) = N(2)-succinyl-L-ornithine + 2 NH4(+) + CO2. It participates in amino-acid degradation; L-arginine degradation via AST pathway; L-glutamate and succinate from L-arginine: step 2/5. In terms of biological role, catalyzes the hydrolysis of N(2)-succinylarginine into N(2)-succinylornithine, ammonia and CO(2). The protein is N-succinylarginine dihydrolase of Legionella pneumophila (strain Corby).